The primary structure comprises 198 residues: Formate-dependent nitrite reductase complex subunit NrfG (198 aa).

TPR repeat units lie at residues 73–106 and 144–177; these read SEQW…RGEN and ITAL…NSPR.

In terms of biological role, required for formate-dependent nitrite reduction. Not required for the biosynthesis of any of the c-type cytochromes nor for the secretion of the periplasmic cytochromes. The sequence is that of Formate-dependent nitrite reductase complex subunit NrfG (nrfG) from Escherichia coli O157:H7.